The sequence spans 220 residues: Ribonuclease P protein component 3 (220 aa).

It belongs to the eukaryotic/archaeal RNase P protein component 3 family. Consists of a catalytic RNA component and at least 4-5 protein subunits.

It localises to the cytoplasm. The catalysed reaction is Endonucleolytic cleavage of RNA, removing 5'-extranucleotides from tRNA precursor.. Functionally, part of ribonuclease P, a protein complex that generates mature tRNA molecules by cleaving their 5'-ends. In Thermococcus kodakarensis (strain ATCC BAA-918 / JCM 12380 / KOD1) (Pyrococcus kodakaraensis (strain KOD1)), this protein is Ribonuclease P protein component 3.